Here is a 499-residue protein sequence, read N- to C-terminus: Endosomal/lysosomal proton channel TMEM175 (499 aa).

A compositionally biased stretch (polar residues) spans Met-1–Ala-10. Positions Met-1–Gly-26 are disordered. Topologically, residues Met-1–Ser-30 are cytoplasmic. A helical transmembrane segment spans residues His-31–Thr-53. The RxxxFSD motif 1 signature appears at Arg-32–Asp-38. Topologically, residues His-54–Arg-74 are lumenal. The interval Thr-55–Glu-60 is short helix H1-1. The segment at Gln-62–Gln-68 is short helix H2-1. Residues Ile-75–Gln-97 traverse the membrane as a helical segment. At Val-98 to Asp-103 the chain is on the cytoplasmic side. A helical transmembrane segment spans residues Asp-104 to Ser-125. Residues Leu-126–Leu-135 lie on the Lumenal side of the membrane. The helical transmembrane segment at Gly-136–Tyr-157 threads the bilayer. At Ala-158–His-181 the chain is on the cytoplasmic side. The helical transmembrane segment at Ile-182–Phe-202 threads the bilayer. The Lumenal segment spans residues Phe-203–Ser-207. Residues Tyr-208 to Cys-227 form a helical membrane-spanning segment. Residues Lys-228 to Ser-254 are Cytoplasmic-facing. The helical transmembrane segment at Lys-255–Glu-279 threads the bilayer. The RxxxFSD motif 2 motif lies at Arg-257–Asp-263. Residues Asp-280–Gln-306 lie on the Lumenal side of the membrane. The interval Pro-285–Ser-293 is short helix H1-2. The tract at residues Ser-295–Gly-301 is short helix H2-2. The helical transmembrane segment at Phe-307–Leu-329 threads the bilayer. Residues His-330 to Thr-335 lie on the Cytoplasmic side of the membrane. The chain crosses the membrane as a helical span at residues Gln-336–Gln-357. Residues Gln-358–Arg-372 are Lumenal-facing. Residues Val-373–Thr-393 form a helical membrane-spanning segment. The Cytoplasmic portion of the chain corresponds to Ala-394–His-413. A helical membrane pass occupies residues Ala-414–Leu-437. At Ser-438 to Arg-439 the chain is on the lumenal side. Residues Phe-440–Ala-466 traverse the membrane as a helical segment. Over Leu-467 to Cys-499 the chain is Cytoplasmic.

The protein belongs to the TMEM175 family. As to quaternary structure, homodimer. Interacts with AKT (AKT1, AKT2 or AKT3); leading to formation of the lysoK(GF) complex, which activates the channel. Interacts with LAMP1; inhibiting the proton channel activity of TMEM175. Interacts with LAMP2; inhibiting the proton channel activity of TMEM175.

It is found in the endosome membrane. Its subcellular location is the lysosome membrane. The enzyme catalyses H(+)(in) = H(+)(out). It carries out the reaction K(+)(in) = K(+)(out). Active at low pH (under pH 4.6): proton channel activity is activated by luminal side protons. Polyunsaturated fatty acids, such as arachidonic acid, also activate the channel activity. Proton channel activity is directly inhibited by LAMP1 or LAMP2, facilitating lysosomal acidification. Channel activity is activated following interaction with AKT (AKT1, AKT2 or AKT3): interaction promotes activation from closed to an open state. Activation by AKT is independent of AKT serine/threonine-protein kinase activity. In terms of biological role, proton-activated proton channel that catalyzes proton efflux from endosomes and lysosomes to maintain a steady-state pH. Activated at low pH (under pH 4.6) by luminal side protons: selectively mediates lysosomal proton release from lysosomes, eliciting a proton leak that balances V-ATPase activity to maintain pH homeostasis. Regulation of lumenal pH stability is required for autophagosome-lysosome fusion. Also acts as a potassium channel at higher pH, regulating potassium conductance in endosomes and lysosomes. Constitutes the pore-forming subunit of the lysoK(GF) complex, a complex activated by extracellular growth factors. The lysoK(GF) complex is composed of TMEM175 and AKT (AKT1, AKT2 or AKT3), a major target of growth factor receptors: in the complex, TMEM175 channel is opened by conformational changes by AKT, leading to its activation. The lysoK(GF) complex is required to protect neurons against stress-induced damage. The protein is Endosomal/lysosomal proton channel TMEM175 of Rattus norvegicus (Rat).